We begin with the raw amino-acid sequence, 1235 residues long: DNA polymerase catalytic subunit (1235 aa).

Disordered regions lie at residues 640 to 692 (QGRF…TAGR) and 1098 to 1134 (AAAP…ASKP). Residues 650–661 (APKRPAAAREDE) show a composition bias toward basic and acidic residues. Over residues 662–675 (ERPEEEGEDEDERE) the composition is skewed to acidic residues. Positions 676 to 691 (EGGGEREPEGARETAG) are enriched in basic and acidic residues.

It belongs to the DNA polymerase type-B family. Forms a complex with the ssDNA-binding protein UL29, the DNA polymerase processivity factor, and the alkaline exonuclease. Interacts with the putative helicase-primase complex subunit UL8; this interaction may coordinate leading and lagging strand DNA synthesis at the replication fork.

Its subcellular location is the host nucleus. The enzyme catalyses DNA(n) + a 2'-deoxyribonucleoside 5'-triphosphate = DNA(n+1) + diphosphate. The catalysed reaction is Endonucleolytic cleavage to 5'-phosphomonoester.. Its function is as follows. Replicates viral genomic DNA. The replication complex is composed of six viral proteins: the DNA polymerase, processivity factor, primase, primase-associated factor, helicase, and ssDNA-binding protein. Additionally, the polymerase contains an intrinsic ribonuclease H (RNase H) activity that specifically degrades RNA/DNA heteroduplexes or duplex DNA substrates in the 5' to 3' direction. Therefore, it can catalyze the excision of the RNA primers that initiate the synthesis of Okazaki fragments at a replication fork during viral DNA replication. This chain is DNA polymerase catalytic subunit, found in Homo sapiens (Human).